Consider the following 139-residue polypeptide: D-ribose pyranase (139 aa).

Residue His-20 is the Proton donor of the active site. Residues Asp-28, His-106, and 128–130 contribute to the substrate site; that span reads YAN.

It belongs to the RbsD / FucU family. RbsD subfamily. In terms of assembly, homodecamer.

The protein resides in the cytoplasm. It carries out the reaction beta-D-ribopyranose = beta-D-ribofuranose. It functions in the pathway carbohydrate metabolism; D-ribose degradation; D-ribose 5-phosphate from beta-D-ribopyranose: step 1/2. Catalyzes the interconversion of beta-pyran and beta-furan forms of D-ribose. The chain is D-ribose pyranase from Enterobacter sp. (strain 638).